A 283-amino-acid polypeptide reads, in one-letter code: Pantothenate synthetase (283 aa).

Residue 34-41 (MGALHDGH) participates in ATP binding. Catalysis depends on His-41, which acts as the Proton donor. Gln-65 is a (R)-pantoate binding site. A beta-alanine-binding site is contributed by Gln-65. Residue 152-155 (GSKD) participates in ATP binding. Gln-158 contributes to the (R)-pantoate binding site. ATP-binding positions include Val-181 and 189–192 (MSSR).

This sequence belongs to the pantothenate synthetase family. Homodimer.

Its subcellular location is the cytoplasm. The enzyme catalyses (R)-pantoate + beta-alanine + ATP = (R)-pantothenate + AMP + diphosphate + H(+). It functions in the pathway cofactor biosynthesis; (R)-pantothenate biosynthesis; (R)-pantothenate from (R)-pantoate and beta-alanine: step 1/1. Its function is as follows. Catalyzes the condensation of pantoate with beta-alanine in an ATP-dependent reaction via a pantoyl-adenylate intermediate. This chain is Pantothenate synthetase, found in Rhodopseudomonas palustris (strain ATCC BAA-98 / CGA009).